The chain runs to 58 residues: U8-ctenitoxin-Pr1a (58 aa).

Disulfide bonds link C2-C16, C9-C22, C15-C40, C24-C38, and C48-C55.

As to expression, expressed by the venom gland.

The protein localises to the secreted. No toxic effects on mice at dose levels of 5 ug per mouse. May be toxic to insects. The polypeptide is U8-ctenitoxin-Pr1a (Phoneutria reidyi (Brazilian Amazonian armed spider)).